The primary structure comprises 360 residues: Mannose-1-phosphate guanylyltransferase catalytic subunit beta (360 aa).

Positions 2–222 are substrate-binding domain; that stretch reads KALILVGGYG…QGFWMDIGQP (221 aa). Residue D110 coordinates GDP-alpha-D-mannose. Position 110 (D110) interacts with Mg(2+). The active site involves K162. D218 contacts GDP-alpha-D-mannose. D218 lines the Mg(2+) pocket. The hexapeptide repeat domain stretch occupies residues 245–360; sequence CSGPGIVGNV…ESVPEPRIIM (116 aa).

It belongs to the transferase hexapeptide repeat family. In terms of assembly, component of the GMPPA-GMPPB mannose-1-phosphate guanylyltransferase complex composed of 4 GMPPA subunits and 8 GMPPB subunits; the complex is organized into three layers, a central layer made up of 2 GMPPA dimers sandwiched between two layers each made up of 2 GMPPB dimers. GMPPB catalytic activity is reduced when part of the complex and binding of GDP-alpha-D-Mannose by GMPPA induces allosteric feedback inhibition of GMPPB. It depends on Mg(2+) as a cofactor. Ubiquitously expressed, including in brain and skeletal muscle. As to expression, weakly expressed with highest expression in skeletal muscle, brain and gonads.

Its subcellular location is the cytoplasm. The enzyme catalyses alpha-D-mannose 1-phosphate + GTP + H(+) = GDP-alpha-D-mannose + diphosphate. It participates in nucleotide-sugar biosynthesis; GDP-alpha-D-mannose biosynthesis; GDP-alpha-D-mannose from alpha-D-mannose 1-phosphate (GTP route): step 1/1. Its activity is regulated as follows. Enzyme activity is reduced by incorporation into the GMPPA-GMPPB mannose-1-phosphate guanylyltransferase complex. Allosterically inhibited, when part of the GMPPA-GMPPB complex, by GDP-alpha-D-mannose binding to GMPPA. In terms of biological role, catalytic subunit of the GMPPA-GMPPB mannose-1-phosphate guanylyltransferase complex. Catalyzes the formation of GDP-mannose, an essential precursor of glycan moieties of glycoproteins and glycolipids. Can catalyze the reverse reaction in vitro. Together with GMPPA regulates GDP-alpha-D-mannose levels. This chain is Mannose-1-phosphate guanylyltransferase catalytic subunit beta, found in Homo sapiens (Human).